Reading from the N-terminus, the 188-residue chain is Archaetidylinositol phosphate synthase (188 aa).

2 helical membrane-spanning segments follow: residues 20 to 40 (LASL…ITLL) and 51 to 71 (ILAG…GALA). Residues Asp64, Asp67, Asp85, and Asp89 each coordinate Mg(2+). Asp89 functions as the Proton acceptor in the catalytic mechanism. The next 2 membrane-spanning stretches (helical) occupy residues 96–116 (ILFG…LTLI) and 147–167 (IIII…YLVA).

Belongs to the CDP-alcohol phosphatidyltransferase class-I family. It depends on Mn(2+) as a cofactor. Mg(2+) is required as a cofactor.

Its subcellular location is the cell membrane. The catalysed reaction is CDP-2,3-bis-O-(phytanyl)-sn-glycerol + 1D-myo-inositol 3-phosphate = saturated 1-archaetidyl-1D-myo-inositol 3-phosphate + CMP + H(+). It functions in the pathway lipid metabolism; phospholipid metabolism. Catalyzes the formation of archaetidylinositol phosphate (AIP) from CDP-archaeol (CDP-ArOH or CDP-2,3-bis-(O-phytanyl)-sn-glycerol) and 1L-myo-inositol 1-phosphate (IP or 1D-myo-inositol 3-phosphate). AIP is a precursor of archaetidyl-myo-inositol (AI), an ether-type inositol phospholipid ubiquitously distributed in archaea membranes and essential for glycolipid biosynthesis in archaea. In Pyrococcus horikoshii (strain ATCC 700860 / DSM 12428 / JCM 9974 / NBRC 100139 / OT-3), this protein is Archaetidylinositol phosphate synthase.